The primary structure comprises 334 residues: CRISPR-associated endonuclease Cas1 (334 aa).

Residues glutamate 161, histidine 226, and glutamate 241 each contribute to the Mn(2+) site.

The protein belongs to the CRISPR-associated endonuclease Cas1 family. In terms of assembly, homodimer, forms a heterotetramer with a Cas2 homodimer. Mg(2+) serves as cofactor. Requires Mn(2+) as cofactor.

In terms of biological role, CRISPR (clustered regularly interspaced short palindromic repeat), is an adaptive immune system that provides protection against mobile genetic elements (viruses, transposable elements and conjugative plasmids). CRISPR clusters contain spacers, sequences complementary to antecedent mobile elements, and target invading nucleic acids. CRISPR clusters are transcribed and processed into CRISPR RNA (crRNA). Acts as a dsDNA endonuclease. Involved in the integration of spacer DNA into the CRISPR cassette. This chain is CRISPR-associated endonuclease Cas1, found in Methanothermobacter thermautotrophicus (strain ATCC 29096 / DSM 1053 / JCM 10044 / NBRC 100330 / Delta H) (Methanobacterium thermoautotrophicum).